The chain runs to 126 residues: Antimicrobial protein 1 (126 aa).

Positions 1-24 are cleaved as a signal peptide; that stretch reads MRSSLLLGLTVVLLLGVTVPPCMA.

As to expression, strongly expressed in gills, hemocytes and reproductive tract, with weaker expression in muscle, heart and digestive tract. Not detected in eyes and hepatopancreas (at protein level).

Its subcellular location is the secreted. Its function is as follows. Has antibacterial activity against the Gram-positive bacteria E.coli (MIC&lt;50 ug/ml) and P.aeruginosa (MIC&lt;25 ug/ml), and the Gram-negative bacteria S.aureus (MIC&lt;100 ug/ml) and S.pyogenes (MIC&lt;50 ug/ml). This Scylla serrata (Mud crab) protein is Antimicrobial protein 1.